An 87-amino-acid chain; its full sequence is Acyl-CoA-binding protein (87 aa).

The residue at position 2 (serine 2) is an N-acetylserine. Positions 2 to 87 (SQAEFDKAAE…VEDLKKKYGI (86 aa)) constitute an ACB domain. Lysine 8 bears the N6-acetyllysine; alternate mark. Lysine 8 carries the N6-succinyllysine; alternate modification. Residue lysine 14 coordinates an acyl-CoA. Residue lysine 17 is modified to N6-succinyllysine. Position 19 is an N6-acetyllysine (lysine 19). Position 29 is a phosphotyrosine (tyrosine 29). Residues 29 to 33 (YSHYK), lysine 55, and tyrosine 74 each bind an acyl-CoA. N6-acetyllysine; alternate is present on lysine 55. Lysine 55 is subject to N6-succinyllysine; alternate. The residue at position 55 (lysine 55) is an N6-(2-hydroxyisobutyryl)lysine; alternate. The residue at position 55 (lysine 55) is an N6-malonyllysine; alternate. Lysine 77 carries the N6-acetyllysine; alternate modification. Position 77 is an N6-succinyllysine; alternate (lysine 77).

It belongs to the ACBP family. Monomer.

The protein resides in the endoplasmic reticulum. It is found in the golgi apparatus. Binds medium- and long-chain acyl-CoA esters with very high affinity and may function as an intracellular carrier of acyl-CoA esters. The polypeptide is Acyl-CoA-binding protein (DBI) (Canis lupus familiaris (Dog)).